Reading from the N-terminus, the 549-residue chain is Membrane protein insertase YidC (549 aa).

The helical transmembrane segment at 6-26 threads the bilayer; it reads NLLLIGLLLVSFMLWQSWMVD. The tract at residues 35-55 is disordered; that stretch reads ATAESSVPASSGGDVPNQNDA. Transmembrane regions (helical) follow at residues 349 to 369, 424 to 444, 462 to 482, and 503 to 523; these read QFLH…TMIV, LGGC…YWTL, LSVK…MWYI, and PIVF…YWVV.

Belongs to the OXA1/ALB3/YidC family. Type 1 subfamily. In terms of assembly, interacts with the Sec translocase complex via SecD. Specifically interacts with transmembrane segments of nascent integral membrane proteins during membrane integration.

The protein resides in the cell inner membrane. Its function is as follows. Required for the insertion and/or proper folding and/or complex formation of integral membrane proteins into the membrane. Involved in integration of membrane proteins that insert both dependently and independently of the Sec translocase complex, as well as at least some lipoproteins. Aids folding of multispanning membrane proteins. The chain is Membrane protein insertase YidC from Tolumonas auensis (strain DSM 9187 / NBRC 110442 / TA 4).